Reading from the N-terminus, the 571-residue chain is Phosphoenolpyruvate-protein phosphotransferase (571 aa).

His189 (tele-phosphohistidine intermediate) is an active-site residue. The phosphoenolpyruvate site is built by Arg296 and Arg332. Mg(2+)-binding residues include Glu431 and Asp455. Phosphoenolpyruvate-binding positions include 454-455 (ND) and Arg465. The Proton donor role is filled by Cys502.

This sequence belongs to the PEP-utilizing enzyme family. As to quaternary structure, homodimer. Mg(2+) serves as cofactor.

Its subcellular location is the cytoplasm. The catalysed reaction is L-histidyl-[protein] + phosphoenolpyruvate = N(pros)-phospho-L-histidyl-[protein] + pyruvate. General (non sugar-specific) component of the phosphoenolpyruvate-dependent sugar phosphotransferase system (sugar PTS). This major carbohydrate active-transport system catalyzes the phosphorylation of incoming sugar substrates concomitantly with their translocation across the cell membrane. Enzyme I transfers the phosphoryl group from phosphoenolpyruvate (PEP) to the phosphoryl carrier protein (HPr). In Buchnera aphidicola subsp. Acyrthosiphon pisum (strain APS) (Acyrthosiphon pisum symbiotic bacterium), this protein is Phosphoenolpyruvate-protein phosphotransferase (ptsI).